A 398-amino-acid polypeptide reads, in one-letter code: Aspartate aminotransferase (398 aa).

3 residues coordinate L-aspartate: Gly36, Trp132, and Asn185. Lys248 carries the post-translational modification N6-(pyridoxal phosphate)lysine. Arg376 lines the L-aspartate pocket.

It belongs to the class-I pyridoxal-phosphate-dependent aminotransferase family. As to quaternary structure, homodimer. Pyridoxal 5'-phosphate serves as cofactor.

Its subcellular location is the cytoplasm. The catalysed reaction is L-aspartate + 2-oxoglutarate = oxaloacetate + L-glutamate. This chain is Aspartate aminotransferase (aspC), found in Pseudomonas aeruginosa (strain ATCC 15692 / DSM 22644 / CIP 104116 / JCM 14847 / LMG 12228 / 1C / PRS 101 / PAO1).